A 74-amino-acid polypeptide reads, in one-letter code: Acyl carrier protein (74 aa).

Residues 1-74 form the Carrier domain; sequence MFEKVRKIIA…DVVEYIKNNS (74 aa). O-(pantetheine 4'-phosphoryl)serine is present on Ser-34.

It belongs to the acyl carrier protein (ACP) family. In terms of processing, 4'-phosphopantetheine is transferred from CoA to a specific serine of apo-ACP by AcpS. This modification is essential for activity because fatty acids are bound in thioester linkage to the sulfhydryl of the prosthetic group.

Its subcellular location is the cytoplasm. Its pathway is lipid metabolism; fatty acid biosynthesis. Functionally, carrier of the growing fatty acid chain in fatty acid biosynthesis. This chain is Acyl carrier protein, found in Acetivibrio thermocellus (strain ATCC 27405 / DSM 1237 / JCM 9322 / NBRC 103400 / NCIMB 10682 / NRRL B-4536 / VPI 7372) (Clostridium thermocellum).